Consider the following 1726-residue polypeptide: MKIIFFLCSFLFFIINTQCVTHESYQELVKKLEALEDAVLTGYGLFHKEKMILNEEEITTKGASAQSGTSGTSGTSGTSGTSGTSGTSAQSGTSGTSAQSGTSGTSAQSGTSGTSGTSGTSPSSRSNTLPRSNTSSGASPPADASDSDAKSYADLKHRVRNYLFTIKELKYPELFDLTNHMLTLCDNIHGFKYLIDGYEEINELLYKLNFYFDLLRAKLNDVCANDYCQIPFNLKIRANELDVLKKLVFGYRKPLDNIKDNVGKMEDYIKKNKTTIANINELIEGSKKTIDQNKNADNEEGKKKLYQAQYDLSIYNKQLEEAHNLISVLEKRIDTLKKNENIKELLDKINEIKNPPPANSGNTPNTLLDKNKKIEEHEEKIKEIAKTIKFNIDSLFTDPLELEYYLREKNKKVDVTPKSQDPTKSVQIPKVPYPNGIVYPLPLTDIHNSLAADNDKNSYGDLMNPDTKEKINEKIITDNKERKIFINNIKKQIDLEEKKINHTKEQNKKLLEDYEKSKKDYEELLEKFYEMKFNNNFDKDVVDKIFSARYTYNVEKQRYNNKFSSSNNSVYNVQKLKKALSYLEDYSLRKGISEKDFNHYYTLKTGLEADIKKLTEEIKSSENKILEKNFKGLTHSANASLEVYDIVKLQVQKVLLIKKIEDLRKIELFLKNAQLKDSIHVPNIYKPQNKPEPYYLIVLKKEVDKLKEFIPKVKDMLKKEQAVLSSITQPLVAASETTEDGGHSTHTLSQSGETEVTEETEETEETVGHTTTVTITLPPKEVKVVENSIEHKSNDNSQALTKTVYLKKLDEFLTKSYICHKYILVSNSSMDQKLLEVYNLTPEEENELKSCDPLDLLFNIQNNIPAMYSLYDSMNNDLQHLFFELYQKEMIYYLHKLKEENHIKKLLEEQKQITGTSSTSSPGNTTVNTAQSATHSNSQNQQSNASSTNTQNGVAVSSGPAVVEESHDPLTVLSISNDLKGIVSLLNLGNKTKVPNPLTISTTEMEKFYENILKNNDTYFNDDIKQFVKSNSKVITGLTETQKNALNDEIKKLKDTLQLSFDLYNKYKLKLDRLFNKKKELGQDKMQIKKLTLLKEQLESKLNSLNNPHNVLQNFSVFFNKKKEAEIAETENTLENTKILLKHYKGLVKYYNGESSPLKTLSEVSIQTEDNYANLEKFRVLSKIDGKLNDNLHLGKKKLSFLSSGLHQLITELKEVIKNKNYTGNSPSENNKKVNEALKSYENFLPEAKVTTVVTPPQPDVTPSPLSVRVSGSSGSTKEETQIPTSGSLLTELQQVVQLQNYDEEDDSLVVLPIFGESEDNDEYLDQVVTGEAISVTMDNILSGFENEYDVIYLKPLAGVYRSLKKQIEKNIFTFNLNLNDILNSRLKKRKYFLDVLESDLMQFKHISSNEYIIEDSFKLLNSEQKNTLLKSYKYIKESVENDIKFAQEGISYYEKVLAKYKDDLESIKKVIKEEKEKFPSSPPTTPPSPAKTDEQKKESKFLPFLTNIETLYNNLVNKIDDYLINLKAKINDCNVEKDEAHVKITKLSDLKAIDDKIDLFKNHNDFDAIKKLINDDTKKDMLGKLLSTGLVQNFPNTIISKLIEGKFQDMLNISQHQCVKKQCPENSGCFRHLDEREECKCLLNYKQEGDKCVENPNPTCNENNGGCDADAKCTEEDSGSNGKKITCECTKPDSYPLFDGIFCSSSNFLGISFLLILMLILYSFI.

Positions Met1–Cys19 are cleaved as a signal peptide. Over residues Lys61–Ser124 the composition is skewed to low complexity. The interval Lys61–Ala149 is disordered. Positions Arg125–Thr134 are enriched in polar residues. Asn133 carries an N-linked (GlcNAc...) asparagine glycan. The span at Ser135–Ala144 shows a compositional bias: low complexity. 4 N-linked (GlcNAc...) asparagine glycosylation sites follow: Asn272, Asn501, Asn567, and Asn638. Residues Ser735–Thr771 are disordered. Acidic residues predominate over residues Glu755–Glu765. Residues Asn827, Asn924, Asn944, Asn990, Asn1016, Asn1114, and Asn1221 are each glycosylated (N-linked (GlcNAc...) asparagine). The segment covering Thr914–Asn952 has biased composition (low complexity). Positions Thr914 to Ala961 are disordered. Disordered stretches follow at residues Val1254–Pro1284 and Lys1476–Lys1497. Over residues Val1270–Pro1284 the composition is skewed to polar residues. Residues Ser1481 to Pro1490 show a composition bias toward pro residues. Residue Asn1613 is glycosylated (N-linked (GlcNAc...) asparagine). EGF-like domains lie at His1617–Pro1657 and Asn1658–Ser1705. Cystine bridges form between Cys1619–Cys1630, Cys1624–Cys1640, Cys1642–Cys1653, Cys1661–Cys1674, Cys1668–Cys1688, and Cys1690–Cys1704. Residue Ser1705 is the site of GPI-anchor amidated serine attachment. The propeptide at Ser1706–Ile1726 is removed in mature form.

In terms of assembly, forms a complex composed of subunits p83, p30, p38, and p42 which remain non-covalently associated; the complex is formed at the merozoite surface prior to egress from host erythrocytes. Forms a complex composed of processed MSP1 subunits, MSP6 subunit p36 and MSP7; the complex is formed at the merozoite surface prior to egress from host erythrocytes. Within the complex, interacts (via subunit p38) with MSP6 subunit p36 and (via subunits p83, p30 and p38) with MSP7 (via subunit p22). Forms a complex composed of MSP1, MSP6, DBLMSP1 and DBLMSP2. Within the complex, interacts (via subunit p38) with DBLMSP1 and DBLMSP2. Forms a complex composed of MSP1, and rhoptry proteins RhopH3, RAP1 and CLAG9/RhopH3. Within the complex, interacts (via subunits p42 and p19) with RhopH3 (via C-terminus). Forms a complex composed of MSP1, MSP6, MSP7, MSP9 and MSP3; within the complex, MSP6 and MSP9 mediate the binding to the host erythrocyte. Interacts (via subunits p19 and p42) with MSP9; the interaction is direct; MSP1 subunits p19 or p42, and MSP9 form a co-ligand complex that interacts with host SLC4A1/Band 3 protein. May interact with PFD6. Interacts with host spectrin. Interacts with host glycophorin GYPA in a sialic acid-independent manner. As to quaternary structure, interacts with host proinflammatory cytokine S100P; the interaction blocks S100P inflammatory and chemotactic activities. In terms of assembly, interacts with host SLC4A1/Band 3 (via 5ABC region) on the host erythrocyte surface in a sialic acid-independent manner. Post-translationally, the p190 precursor is cleaved by SUB1 prior to merozoite egress into 4 subunits p83, p30, p38, and p42 which remain non-covalently associated. SUB1-mediated proteolytic cleavage occurs in an orderly manner; the first cleavage occurs at the p30/p38 site, followed by cleavage at the p83/p30 site, the last cleavage occurs at the p38/p42 site. The order of cleavage is essential for parasite viability. SUB1-mediated processing is essential for merozoite egress. In a second processing step during erythrocyte invasion, p42 is cleaved by SUB2 into p33 and p19; the latter remains attached to the merozoite surface via its GPI-anchor and is endocytosed during the subsequent ring stage.

The protein resides in the cell membrane. The protein localises to the secreted. It is found in the vacuole membrane. Its function is as follows. During the asexual blood stage, involved in merozoite egress from host erythrocytes possibly via its interaction with the host cytoskeleton protein spectrin resulting in the destabilization of the host cytoskeleton and thus leading to erythrocyte cell membrane rupture. Involved in the binding to host erythrocytes and is required for host erythrocyte invasion. Functionally, by binding to host proinflammatory cytokine S100P may interfere with host immune responses. Involved in merozoite invasion of host erythrocytes. May play a role in the biogenesis and/or function of the food vacuole during the intraerythrocytic development. The protein is Merozoite surface protein 1 of Plasmodium falciparum (isolate Palo Alto / Uganda).